The primary structure comprises 249 residues: 2,3-bisphosphoglycerate-dependent phosphoglycerate mutase (249 aa).

Substrate contacts are provided by residues 9 to 16 (RHGQSQWN), 22 to 23 (TG), Arg61, 88 to 91 (ERHY), Lys99, 115 to 116 (RR), and 184 to 185 (GN). The active-site Tele-phosphohistidine intermediate is the His10. Glu88 acts as the Proton donor/acceptor in catalysis.

This sequence belongs to the phosphoglycerate mutase family. BPG-dependent PGAM subfamily. As to quaternary structure, homodimer.

The enzyme catalyses (2R)-2-phosphoglycerate = (2R)-3-phosphoglycerate. Its pathway is carbohydrate degradation; glycolysis; pyruvate from D-glyceraldehyde 3-phosphate: step 3/5. In terms of biological role, catalyzes the interconversion of 2-phosphoglycerate and 3-phosphoglycerate. This chain is 2,3-bisphosphoglycerate-dependent phosphoglycerate mutase, found in Xanthomonas campestris pv. campestris (strain 8004).